Here is a 434-residue protein sequence, read N- to C-terminus: 5-methylthioadenosine/S-adenosylhomocysteine deaminase (434 aa).

The Zn(2+) site is built by His-66 and His-68. Substrate contacts are provided by Glu-95, Arg-148, and His-188. His-215 contacts Zn(2+). Glu-218 and Asp-304 together coordinate substrate. Asp-304 lines the Zn(2+) pocket.

It belongs to the metallo-dependent hydrolases superfamily. MTA/SAH deaminase family. Requires Zn(2+) as cofactor.

The catalysed reaction is S-adenosyl-L-homocysteine + H2O + H(+) = S-inosyl-L-homocysteine + NH4(+). It catalyses the reaction S-methyl-5'-thioadenosine + H2O + H(+) = S-methyl-5'-thioinosine + NH4(+). In terms of biological role, catalyzes the deamination of 5-methylthioadenosine and S-adenosyl-L-homocysteine into 5-methylthioinosine and S-inosyl-L-homocysteine, respectively. Is also able to deaminate adenosine. This is 5-methylthioadenosine/S-adenosylhomocysteine deaminase from Shouchella clausii (strain KSM-K16) (Alkalihalobacillus clausii).